Consider the following 291-residue polypeptide: uncharacterized protein (291 aa).

Residues 1–58 form the HTH lysR-type domain; it reads MDLKWLQTFIAAAESESFREAAEHLYLTQPAVSQHMRKLEDELDMRLFLHSGRRVVLT. The segment at residues 18–37 is a DNA-binding region (H-T-H motif); it reads FREAAEHLYLTQPAVSQHMR.

It belongs to the LysR transcriptional regulatory family.

This is an uncharacterized protein from Bacillus subtilis (strain 168).